A 234-amino-acid polypeptide reads, in one-letter code: Demethylmenaquinone methyltransferase (234 aa).

S-adenosyl-L-methionine contacts are provided by residues Thr-58, Asp-79, and 106-107; that span reads NA.

Belongs to the class I-like SAM-binding methyltransferase superfamily. MenG/UbiE family.

It carries out the reaction a 2-demethylmenaquinol + S-adenosyl-L-methionine = a menaquinol + S-adenosyl-L-homocysteine + H(+). The protein operates within quinol/quinone metabolism; menaquinone biosynthesis; menaquinol from 1,4-dihydroxy-2-naphthoate: step 2/2. Methyltransferase required for the conversion of demethylmenaquinol (DMKH2) to menaquinol (MKH2). The protein is Demethylmenaquinone methyltransferase of Geobacillus stearothermophilus (Bacillus stearothermophilus).